A 299-amino-acid chain; its full sequence is HTH-type transcriptional regulator ArgP (299 aa).

Positions 4 to 60 (PDYRALQALDAVIRERGFERAAQKLCITQSAVSQRIKQLENLFGQPLLVRTVPPQPT) constitute an HTH lysR-type domain. The H-T-H motif DNA-binding region spans 21–40 (FERAAQKLCITQSAVSQRIK).

Belongs to the LysR transcriptional regulatory family. As to quaternary structure, homodimer.

Controls the transcription of genes involved in arginine and lysine metabolism. The sequence is that of HTH-type transcriptional regulator ArgP from Proteus mirabilis (strain HI4320).